The primary structure comprises 603 residues: Adenine deaminase (603 aa).

This sequence belongs to the metallo-dependent hydrolases superfamily. Adenine deaminase family. In terms of assembly, homodimer. Mn(2+) serves as cofactor.

The enzyme catalyses adenine + H2O + H(+) = hypoxanthine + NH4(+). The sequence is that of Adenine deaminase from Klebsiella pneumoniae subsp. pneumoniae (strain ATCC 700721 / MGH 78578).